The sequence spans 997 residues: Sorting nexin-19 (997 aa).

One can recognise a PXA domain in the interval 95-273; that stretch reads ERQLEQEINR…ILVSIFSKYR (179 aa). Disordered stretches follow at residues 313-333 and 413-437; these read SSPA…SPEI and GALE…APGT. Acidic residues predominate over residues 422-435; the sequence is GSECMEGAEAEEAP. The PX domain occupies 538 to 668; sequence LRITGTITAR…EFLALNTDAR (131 aa). A 1,2-diacyl-sn-glycero-3-phospho-(1D-myo-inositol-3-phosphate) is bound by residues arginine 587 and arginine 634. Residues 697 to 728 are disordered; the sequence is FPRSEPQSPTEELSEAENESKPQTEGKKASKS. The segment covering 714 to 724 has biased composition (basic and acidic residues); the sequence is NESKPQTEGKK.

It belongs to the sorting nexin family. In terms of assembly, interacts with PTPRN.

It is found in the early endosome membrane. The protein resides in the cytoplasmic vesicle membrane. Its function is as follows. Plays a role in intracellular vesicle trafficking and exocytosis. May play a role in maintaining insulin-containing dense core vesicles in pancreatic beta-cells and in preventing their degradation. May play a role in insulin secretion. Interacts with membranes containing phosphatidylinositol 3-phosphate (PtdIns(3P)). This chain is Sorting nexin-19, found in Mus musculus (Mouse).